We begin with the raw amino-acid sequence, 355 residues long: Protein RecA (355 aa).

Position 73–80 (73–80) interacts with ATP; that stretch reads GPESSGKT.

It belongs to the RecA family.

Its subcellular location is the cytoplasm. In terms of biological role, can catalyze the hydrolysis of ATP in the presence of single-stranded DNA, the ATP-dependent uptake of single-stranded DNA by duplex DNA, and the ATP-dependent hybridization of homologous single-stranded DNAs. It interacts with LexA causing its activation and leading to its autocatalytic cleavage. This Solidesulfovibrio magneticus (strain ATCC 700980 / DSM 13731 / RS-1) (Desulfovibrio magneticus) protein is Protein RecA.